The primary structure comprises 345 residues: Gibberellin 2-beta-dioxygenase 2 (345 aa).

The Fe2OG dioxygenase domain occupies 170–285 (HSDSLLRINH…RMSMMYFAAP (116 aa)). Residues His209, Asp211, and His266 each contribute to the Fe cation site. Residue Arg276 is part of the active site.

Belongs to the iron/ascorbate-dependent oxidoreductase family. GA2OX subfamily. Fe cation serves as cofactor. In terms of tissue distribution, predominantly expressed in leaves.

It carries out the reaction gibberellin A1 + 2-oxoglutarate + O2 = gibberellin A8 + succinate + CO2. The protein operates within plant hormone biosynthesis; gibberellin biosynthesis. Its function is as follows. Catalyzes the 2-beta-hydroxylation of several biologically active gibberellins, leading to the homeostatic regulation of their endogenous level. Catabolism of gibberellins (GAs) plays a central role in plant development. Converts GA9/GA20 to GA51/GA29 and GA4/GA1 to GA34/GA8. This Pisum sativum (Garden pea) protein is Gibberellin 2-beta-dioxygenase 2 (GA2OX2).